We begin with the raw amino-acid sequence, 440 residues long: Nuclear fusion protein BIK1 (440 aa).

The CAP-Gly domain occupies 26–69 (GPVDTKAGMFAGVDLLANIGKNDGSFMGKKYFQTEYPQSGLFIQ). Ser-95 and Ser-110 each carry phosphoserine. The interval 108–157 (QFSPMDDPKSPTPMRSFRITSRHSGNQQSMDQEASDHHQQQEFGYDNRED) is disordered. Positions 125–139 (RITSRHSGNQQSMDQ) are enriched in polar residues. A compositionally biased stretch (basic and acidic residues) spans 141 to 157 (ASDHHQQQEFGYDNRED). Positions 190-397 (NSSEVTIELR…AQAQTAVESL (208 aa)) form a coiled coil. The short motif at 416–429 (CEHCDTMGHNTAEC) is the CCHC-box element.

The protein resides in the cytoplasm. It localises to the cytoskeleton. Its subcellular location is the microtubule organizing center. The protein localises to the spindle pole body. It is found in the spindle. Functionally, required for nuclear fusion, chromosome disjunction, and nuclear segregation during mitosis. Probably required for the formation or stabilization of microtubules during mitosis and for spindle pole body fusion during conjugation. In Saccharomyces cerevisiae (strain ATCC 204508 / S288c) (Baker's yeast), this protein is Nuclear fusion protein BIK1 (BIK1).